We begin with the raw amino-acid sequence, 434 residues long: Histidinol dehydrogenase (434 aa).

NAD(+) is bound by residues Y130, Q188, and N211. Substrate contacts are provided by S237, Q259, and H262. Residues Q259 and H262 each contribute to the Zn(2+) site. Active-site proton acceptor residues include E326 and H327. Residues H327, D360, E414, and H419 each coordinate substrate. D360 contributes to the Zn(2+) binding site. Position 419 (H419) interacts with Zn(2+).

It belongs to the histidinol dehydrogenase family. Homodimer. It depends on Zn(2+) as a cofactor.

It carries out the reaction L-histidinol + 2 NAD(+) + H2O = L-histidine + 2 NADH + 3 H(+). Its pathway is amino-acid biosynthesis; L-histidine biosynthesis; L-histidine from 5-phospho-alpha-D-ribose 1-diphosphate: step 9/9. In terms of biological role, catalyzes the sequential NAD-dependent oxidations of L-histidinol to L-histidinaldehyde and then to L-histidine. This Salmonella choleraesuis (strain SC-B67) protein is Histidinol dehydrogenase.